A 62-amino-acid polypeptide reads, in one-letter code: Large ribosomal subunit protein uL30 (62 aa).

It belongs to the universal ribosomal protein uL30 family. As to quaternary structure, part of the 50S ribosomal subunit.

The sequence is that of Large ribosomal subunit protein uL30 from Paracoccus denitrificans (strain Pd 1222).